Here is a 74-residue protein sequence, read N- to C-terminus: UPF0435 protein Bcer98_0391 (74 aa).

Belongs to the UPF0435 family.

This Bacillus cytotoxicus (strain DSM 22905 / CIP 110041 / 391-98 / NVH 391-98) protein is UPF0435 protein Bcer98_0391.